A 480-amino-acid polypeptide reads, in one-letter code: M-phase inducer phosphatase cdc-25.2 (480 aa).

The segment covering 1-20 (MNRPSQISQDVAQPLSNQHE) has biased composition (polar residues). The segment at 1–35 (MNRPSQISQDVAQPLSNQHETAMMSSDEDSMSRDS) is disordered. The 107-residue stretch at 243–349 (FDDKYILIDC…FFFAANEANI (107 aa)) folds into the Rhodanese domain. The tract at residues 411–452 (TSAPSTSTENIDTNDDCQKSRTPAVPRIASRRNLFSDPSHSP) is disordered.

It belongs to the MPI phosphatase family.

It catalyses the reaction O-phospho-L-tyrosyl-[protein] + H2O = L-tyrosyl-[protein] + phosphate. Functionally, required for intestinal cell division following the 16E cell stage of embryogenesis. Regulates intestinal cell divisions and binucleations probably by modulating the activity of the cell cycle regulator wee-1.3 and by activating the cdk-1/cyb-1 complex. Plays a role in male tail development, via regulation of the cell divisions of the ray precursor cell lineages, perhaps acting together with cell cycle regulators cyl-1, cdk-1, cyb-3, and cyd-1. This Caenorhabditis elegans protein is M-phase inducer phosphatase cdc-25.2.